The sequence spans 363 residues: Probable L-tyrosine/L-aspartate decarboxylase (363 aa).

Residue Lys208 is modified to N6-(pyridoxal phosphate)lysine.

This sequence belongs to the group II decarboxylase family. MfnA subfamily. Requires pyridoxal 5'-phosphate as cofactor.

The enzyme catalyses L-tyrosine + H(+) = tyramine + CO2. It catalyses the reaction L-aspartate + H(+) = beta-alanine + CO2. The protein operates within cofactor biosynthesis; methanofuran biosynthesis. It participates in cofactor biosynthesis; coenzyme A biosynthesis. In terms of biological role, catalyzes the decarboxylation of L-tyrosine to produce tyramine for methanofuran biosynthesis. Can also catalyze the decarboxylation of L-aspartate to produce beta-alanine for coenzyme A (CoA) biosynthesis. This chain is Probable L-tyrosine/L-aspartate decarboxylase, found in Methanothermobacter thermautotrophicus (strain ATCC 29096 / DSM 1053 / JCM 10044 / NBRC 100330 / Delta H) (Methanobacterium thermoautotrophicum).